Reading from the N-terminus, the 344-residue chain is Trace amine-associated receptor 8c (344 aa).

Topologically, residues 1–36 are extracellular; the sequence is MTSNFSQATLQLCYENVNASCIKTPYSPGLRVLLYM. Asn4 and Asn18 each carry an N-linked (GlcNAc...) asparagine glycan. 2 cysteine pairs are disulfide-bonded: Cys21–Cys185 and Cys96–Cys189. A helical transmembrane segment spans residues 37–57; the sequence is VFGFGAVLAVCGNLLVVISVL. Residues 58 to 67 lie on the Cytoplasmic side of the membrane; the sequence is HFKQLHSPAN. A helical membrane pass occupies residues 68 to 88; the sequence is FLIASLASADFLVGISVMPFS. Residues 89-102 are Extracellular-facing; that stretch reads MVRSIESCWYFGDT. The chain crosses the membrane as a helical span at residues 103–127; the sequence is FCSLHSCCDVAFCYSSALHLCFISV. At 128–146 the chain is on the cytoplasmic side; it reads DRYIAVTDPLVYPTKFTVS. A helical membrane pass occupies residues 147–167; sequence VSGICISISWILPLVYSSAVF. The Extracellular portion of the chain corresponds to 168-196; it reads YTGISAMGIENLVSALNCVGGCQVVVNQD. A helical membrane pass occupies residues 197-217; the sequence is WVLISFLLFFIPTLVMIILYS. The Cytoplasmic portion of the chain corresponds to 218–260; sequence KIFLVAKQQAVKIETSVSGSKGESSLESHKARVAKRERKAAKT. Residues 261-281 traverse the membrane as a helical segment; the sequence is LGVTVLAFIVSWLPYTIDTLI. The Extracellular segment spans residues 282–295; sequence DAFMGFITPAYVYE. Residues 296–319 traverse the membrane as a helical segment; the sequence is FCCWSAYYNSAMNPLIYAFFYPWF. Topologically, residues 320–344 are cytoplasmic; the sequence is RKAMKLILSGKILKGHSSTTSLFSE.

Belongs to the G-protein coupled receptor 1 family.

The protein localises to the cell membrane. Olfactory receptor activated by trace amines, such as N-methylpiperidine and N,N-dimethylcyclohexylamine. Trace amine compounds are enriched in animal body fluids and act on trace amine-associated receptors (TAARs) to elicit both intraspecific and interspecific innate behaviors. Ligand-binding causes a conformation change that triggers signaling via G(s)-class of G alpha proteins (GNAL or GNAS). The chain is Trace amine-associated receptor 8c from Rattus norvegicus (Rat).